The chain runs to 270 residues: Phosphatidylinositol transfer protein alpha isoform (270 aa).

Positions 58, 60, 85, 89, 96, and 194 each coordinate a 1,2-diacyl-sn-glycero-3-phospho-(1D-myo-inositol). Lys-215 carries the N6-acetyllysine modification.

This sequence belongs to the PtdIns transfer protein family. PI transfer class I subfamily. Phosphorylated by PKC in a calcium and phosphatidylserine-dependent manner.

The protein resides in the cytoplasm. The protein localises to the nucleus. It catalyses the reaction a 1,2-diacyl-sn-glycero-3-phosphocholine(in) = a 1,2-diacyl-sn-glycero-3-phosphocholine(out). It carries out the reaction a 1,2-diacyl-sn-glycero-3-phospho-(1D-myo-inositol)(in) = a 1,2-diacyl-sn-glycero-3-phospho-(1D-myo-inositol)(out). Catalyzes the transfer of phosphatidylinositol (PI) and phosphatidylcholine (PC) between membranes. Shows a preference for PI and PC containing shorter saturated or monosaturated acyl chains at the sn-1 and sn-2 positions. Preference order for PC is C16:1 &gt; C16:0 &gt; C18:1 &gt; C18:0 &gt; C20:4 and for PI is C16:1 &gt; C16:0 &gt; C18:1 &gt; C18:0 &gt; C20:4 &gt; C20:3. The sequence is that of Phosphatidylinositol transfer protein alpha isoform (PITPNA) from Bos taurus (Bovine).